The following is a 238-amino-acid chain: Cysteine-rich venom protein (238 aa).

The first 19 residues, 1–19 (MIAFIVLLSLAAVLQQSSG), serve as a signal peptide directing secretion. Residues 20 to 27 (TVDFASES) constitute a propeptide that is removed on maturation. One can recognise an SCP domain in the interval 39–164 (KKHNALRRSV…PTKYLYVCQY (126 aa)). Disulfide bonds link Cys75/Cys153, Cys92/Cys165, Cys148/Cys162, Cys184/Cys191, Cys187/Cys196, Cys200/Cys233, Cys209/Cys227, and Cys218/Cys231. The 34-residue stretch at 200 to 233 (CKREDDYSNCKSLAEKNKCMEEWMKSKCPASCFC) folds into the ShKT domain.

Belongs to the CRISP family. As to expression, expressed by the venom gland.

It localises to the secreted. In terms of biological role, blocks olfactory (CNGA2) and retinal (CNGA1) cyclic nucleotide-gated (CNG) ion channel currents. Does not inhibit retinal (CNGA3) currents. It forms high-affinity contacts with the pore turret region and most likely inhibits CNG channel current by blocking the external entrance to the transmembrane pore. Does not affect neither depolarization- nor caffeine-induced contraction arterial smooth muscle. In Demansia vestigiata (Lesser black whip snake), this protein is Cysteine-rich venom protein.